Reading from the N-terminus, the 485-residue chain is ATP synthase subunit beta 2 (485 aa).

The segment covering 1–10 (MSGMGEKSEQ) has biased composition (basic and acidic residues). A disordered region spans residues 1-27 (MSGMGEKSEQISKSARSTDPQEQESVA). Polar residues predominate over residues 11-24 (ISKSARSTDPQEQE). 177–184 (GGAGVGKT) lines the ATP pocket.

It belongs to the ATPase alpha/beta chains family. F-type ATPases have 2 components, CF(1) - the catalytic core - and CF(0) - the membrane proton channel. CF(1) has five subunits: alpha(3), beta(3), gamma(1), delta(1), epsilon(1). CF(0) has three main subunits: a(1), b(2) and c(9-12). The alpha and beta chains form an alternating ring which encloses part of the gamma chain. CF(1) is attached to CF(0) by a central stalk formed by the gamma and epsilon chains, while a peripheral stalk is formed by the delta and b chains.

The protein resides in the cell inner membrane. It catalyses the reaction ATP + H2O + 4 H(+)(in) = ADP + phosphate + 5 H(+)(out). Produces ATP from ADP in the presence of a proton gradient across the membrane. The catalytic sites are hosted primarily by the beta subunits. This is ATP synthase subunit beta 2 from Nitrosomonas eutropha (strain DSM 101675 / C91 / Nm57).